Consider the following 211-residue polypeptide: WAP four-disulfide core domain protein 1 (211 aa).

An N-terminal signal peptide occupies residues Met-1–Ala-23. The WAP domain maps to Arg-50–Val-99. Cystine bridges form between Cys-57/Cys-87, Cys-69/Cys-91, Cys-74/Cys-86, and Cys-80/Cys-95. A compositionally biased stretch (basic and acidic residues) spans Val-182–Asn-198. Residues Val-182 to Pro-211 are disordered.

The protein resides in the secreted. In terms of biological role, has growth inhibitory activity. The polypeptide is WAP four-disulfide core domain protein 1 (Wfdc1) (Mus musculus (Mouse)).